The chain runs to 425 residues: Pectate lyase L (425 aa).

The first 25 residues, 1–25, serve as a signal peptide directing secretion; the sequence is MKYLNCFISTGLAAFFLVNSTSVLA. C28 and C114 are disulfide-bonded. Ca(2+) is bound by residues D209, D233, D234, and D237. The Proton acceptor role is filled by K273. Residues N402, S413, A416, D418, and E423 each contribute to the Ca(2+) site.

This sequence belongs to the polysaccharide lyase 9 family. The cofactor is Ca(2+).

The protein resides in the secreted. The catalysed reaction is Eliminative cleavage of (1-&gt;4)-alpha-D-galacturonan to give oligosaccharides with 4-deoxy-alpha-D-galact-4-enuronosyl groups at their non-reducing ends.. The protein operates within glycan metabolism; pectin degradation; 2-dehydro-3-deoxy-D-gluconate from pectin: step 2/5. Functionally, presents an endo-cleaving activity on polygalacturonate or partially methylated pectin. Is effective in the maceration of plant tissue, and has an important role in soft-rot disease. Is 280-fold less active against polygalacturonate than the major pectate lyase PelB. When assayed on polygalacturonate, PelL releases oligogalacturonates of different sizes; upon prolonged incubation, PelL degrades the primary products to unsaturated tetramer and pentamer in addition to unsaturated dimer and trimer. When assayed on oligogalacturonates (degrees of polymerization of 2 to 8), it preferentially forms unsaturated tetramer, and displays the highest activity on the octamer. This chain is Pectate lyase L (pelL), found in Dickeya dadantii (strain 3937) (Erwinia chrysanthemi (strain 3937)).